The primary structure comprises 704 residues: Ion-translocating oxidoreductase complex subunit C (704 aa).

2 consecutive 4Fe-4S ferredoxin-type domains span residues 368–397 and 407–436; these read MGAPQEEKSCIRCSACADACPADLLPQQLY and KATAHHIADCIECGACAWVCPSNIPLVQYF. Residues C377, C380, C383, C387, C416, C419, C422, and C426 each contribute to the [4Fe-4S] cluster site. The segment at 534–682 is disordered; it reads QARAKQAAHP…AEPADPRKAA (149 aa).

It belongs to the 4Fe4S bacterial-type ferredoxin family. RnfC subfamily. The complex is composed of six subunits: RsxA, RsxB, RsxC, RsxD, RsxE and RsxG. [4Fe-4S] cluster is required as a cofactor.

The protein resides in the cell inner membrane. Part of a membrane-bound complex that couples electron transfer with translocation of ions across the membrane. Required to maintain the reduced state of SoxR. The sequence is that of Ion-translocating oxidoreductase complex subunit C from Salmonella enteritidis PT4 (strain P125109).